Reading from the N-terminus, the 117-residue chain is CUE domain-containing protein CUE4 (117 aa).

Residues 27-74 (QVPSRTVQDAKPAPSVATNDPSPEPVPSAPEERVARLNRHGSDRKRAV) form a disordered region. Residue Lys37 forms a Glycyl lysine isopeptide (Lys-Gly) (interchain with G-Cter in ubiquitin) linkage. Ser48 is subject to Phosphoserine. Residues 56–74 (PEERVARLNRHGSDRKRAV) are compositionally biased toward basic and acidic residues. Residues 74 to 116 (VNSDMVEIVMTMAPHVPQEKVVQDLRNTGSIEHTMENIFAGKL) enclose the CUE domain.

Post-translationally, ubiquitinated.

It localises to the cytoplasm. The protein localises to the endoplasmic reticulum. The sequence is that of CUE domain-containing protein CUE4 (CUE4) from Saccharomyces cerevisiae (strain ATCC 204508 / S288c) (Baker's yeast).